The following is a 103-amino-acid chain: Co-chaperonin GroES (103 aa).

Belongs to the GroES chaperonin family. As to quaternary structure, heptamer of 7 subunits arranged in a ring. Interacts with the chaperonin GroEL.

Its subcellular location is the plastid. It localises to the cyanelle. In terms of biological role, together with the chaperonin GroEL, plays an essential role in assisting protein folding. The GroEL-GroES system forms a nano-cage that allows encapsulation of the non-native substrate proteins and provides a physical environment optimized to promote and accelerate protein folding. GroES binds to the apical surface of the GroEL ring, thereby capping the opening of the GroEL channel. The polypeptide is Co-chaperonin GroES (Cyanophora paradoxa).